Reading from the N-terminus, the 958-residue chain is MAHHDSVLVISSSPDFPSICDLLPKATRQPSLRSGSNAAPVSNDAPAAFTSAANIWQSSRARHLEGAEISNIGPSQSATTAADLATVPAESPIKSGVEGPTLPLGGDKKKPRTAGARKKKGKTETIEPPLALDMAVADGPVAVAPPKKSGRKPRAKKDATLAQTTLPKGKVTKTAAREITKAQKKAETVSRHFTPHTSAPPELVAGPIDDSPSVFEPAMARRMDWTPPRESASVHCLADSSMEKEVSSSALSLQDHVFKNLQDTYGRTMEASGYIGAALPLTSMDVLGKRKLVEMVSCVGHRQEIPQASPTKPKVVKKKPRTITELATAAYRRPEEAERSTLSRQQDTHIPSGNLELPSEQLTAASKSASAKPKAAKKAPKPRATKKKQSPPEPILLSPTSAMRQVSNQDFVFGTASQLATEDDPVLLRALHEAMKVSNQADSDPFATPSPGNSNLAIRRRSGAGLWAAGARYGDGDLLDAEVLDLTRSSPLTLAQFAQNPPPPCPEAVLADKPPVESAYIEIEMSDDTLDLTISPPVGSPKTLPPCPPRPGGQAVRHKDSNLAVSGRPQTPPQEADFDPPPSNQEQHQLLLSQSNTPQQPQPAPPPPPSFELYTDARLAKEVASYGFKVVKKRTAMIALLNRCWESRNKTALGSTAAQAAMSTSAPNQAASPSRPRGRPRKDSLTATTEVVQAPSPAKKGRKKAGVVSGAGSEVPQPEKWPRGRPRKDSAASVSSITAPAATNPRRRSAAISDVDSDEPQVEKRSRGRPKKDATTSPATRATRAKAPPSPKRAKSPCTTQPAPTTPRRRKAPAKQIFEIPDSGSDDPFASSAPSSPDQHSDLFSSPPAVDLSVTEDTEASLIASPTTQDVSLFGYITRAVASAPPTKDPANPSWHEKMLMYDPIILEDLTAWLNAGRLDQVGFDGEVAPGDVKKWCESKSVCCLWRVNLRGKERKRF.

Disordered regions lie at residues 89–123, 183–209, 326–400, 531–589, 594–613, and 655–849; these read AESP…KGKT, QKKA…GPID, LATA…LSPT, DLTI…EQHQ, QSNT…SFEL, and STAA…SPPA. Residues 109 to 121 show a composition bias toward basic residues; that stretch reads KKPRTAGARKKKG. The segment covering 332-341 has biased composition (basic and acidic residues); it reads RRPEEAERST. Polar residues predominate over residues 342–351; that stretch reads LSRQQDTHIP. Over residues 364-373 the composition is skewed to low complexity; sequence AASKSASAKP. Positions 374–389 are enriched in basic residues; the sequence is KAAKKAPKPRATKKKQ. The span at 600–610 shows a compositional bias: pro residues; the sequence is QPQPAPPPPPS. Composition is skewed to low complexity over residues 655-666, 775-787, and 821-838; these read STAAQAAMSTSA, TTSP…RAKA, and PDSG…SSPD.

Belongs to the SLX4 family. As to quaternary structure, forms a heterodimer with SLX1. In terms of processing, phosphorylated in response to DNA damage.

The protein localises to the nucleus. Its function is as follows. Regulatory subunit of the SLX1-SLX4 structure-specific endonuclease that resolves DNA secondary structures generated during DNA repair and recombination. Has endonuclease activity towards branched DNA substrates, introducing single-strand cuts in duplex DNA close to junctions with ss-DNA. This Chaetomium globosum (strain ATCC 6205 / CBS 148.51 / DSM 1962 / NBRC 6347 / NRRL 1970) (Soil fungus) protein is Structure-specific endonuclease subunit SLX4.